A 787-amino-acid chain; its full sequence is (-)-kolavenyl diphosphate synthase, chloroplastic (787 aa).

The N-terminal 47 residues, Met1 to Arg47, are a transit peptide targeting the chloroplast. Lys237 provides a ligand contact to substrate. Asp368 and Asp370 together coordinate Mg(2+). The DXDD motif motif lies at Asp368–Asp371. Lys454 lines the substrate pocket.

Belongs to the terpene synthase family. Tpsc subfamily. The cofactor is Mg(2+). In terms of tissue distribution, expressed in peltate glandular trichomes of leaves. Highly expressed in the first leaf pair.

It is found in the plastid. The protein resides in the chloroplast. It carries out the reaction (2E,6E,10E)-geranylgeranyl diphosphate = (-)-kolavenyl diphosphate. Its activity is regulated as follows. Inhibited by high concentrations of magnesium. Involved in the biosynthesis of clerodane diterpenoids natural products, including salvinorin A with potent agonistic activity on brain kappa-opioid receptors, thus conferring hallucinogenic properties. Diterpene synthase that catalyzes the formation of (-)-kolavenyl diphosphate from geranylgeranyl diphosphate (GGPP) as the first reaction in salvinorin A biosynthesis. This chain is (-)-kolavenyl diphosphate synthase, chloroplastic, found in Salvia divinorum (Maria pastora).